The sequence spans 275 residues: Bis(5'-nucleosyl)-tetraphosphatase, symmetrical (275 aa).

This sequence belongs to the Ap4A hydrolase family.

It catalyses the reaction P(1),P(4)-bis(5'-adenosyl) tetraphosphate + H2O = 2 ADP + 2 H(+). Functionally, hydrolyzes diadenosine 5',5'''-P1,P4-tetraphosphate to yield ADP. The protein is Bis(5'-nucleosyl)-tetraphosphatase, symmetrical of Nitrosospira multiformis (strain ATCC 25196 / NCIMB 11849 / C 71).